Reading from the N-terminus, the 201-residue chain is Ribonuclease HII (201 aa).

The 188-residue stretch at 14-201 (NLIAGVDEVG…KPVKRILGIE (188 aa)) folds into the RNase H type-2 domain. A divalent metal cation contacts are provided by Asp-20, Glu-21, and Asp-112.

Belongs to the RNase HII family. It depends on Mn(2+) as a cofactor. Requires Mg(2+) as cofactor.

The protein localises to the cytoplasm. It carries out the reaction Endonucleolytic cleavage to 5'-phosphomonoester.. Functionally, endonuclease that specifically degrades the RNA of RNA-DNA hybrids. This chain is Ribonuclease HII, found in Photobacterium profundum (strain SS9).